Consider the following 359-residue polypeptide: Probable E3 ubiquitin-protein ligase LUL4 (359 aa).

The interval 1–35 (MGISFSNNNRRRDNNNRRHLHHYPPPPPYYYLDPP) is disordered. Residue Gly-2 is the site of N-myristoyl glycine attachment. Pro residues predominate over residues 23-35 (YPPPPPYYYLDPP). Residues 148–267 (FVFDALFDGS…GSFKVKVVKQ (120 aa)) form a DAR2 domain region. An RING-type zinc finger spans residues 302–341 (CVICMTEAKDTAVLPCRHLCMCSDCAKELRLQSNKCPICR).

Belongs to the RING-type zinc finger family. LOG2 subfamily.

It catalyses the reaction S-ubiquitinyl-[E2 ubiquitin-conjugating enzyme]-L-cysteine + [acceptor protein]-L-lysine = [E2 ubiquitin-conjugating enzyme]-L-cysteine + N(6)-ubiquitinyl-[acceptor protein]-L-lysine.. The protein operates within protein modification; protein ubiquitination. Acts as an E3 ubiquitin-protein ligase, or as part of E3 complex, which accepts ubiquitin from specific E2 ubiquitin-conjugating enzymes and then transfers it to substrates (in vitro). In Arabidopsis thaliana (Mouse-ear cress), this protein is Probable E3 ubiquitin-protein ligase LUL4 (LUL4).